The primary structure comprises 105 residues: U-scoloptoxin(10)-Sm3a (105 aa).

The signal sequence occupies residues 1–23 (MYKFIFIFFTVFFLINIIEESXT).

This sequence belongs to the scoloptoxin-10 family. Post-translationally, contains 3 disulfide bonds. Expressed by the venom gland.

The protein localises to the secreted. This Scolopendra morsitans (Tanzanian blue ringleg centipede) protein is U-scoloptoxin(10)-Sm3a.